The chain runs to 70 residues: Pyruvate-flavodoxin oxidoreductase (70 aa).

It belongs to the pyruvate:ferredoxin/flavodoxin oxidoreductase family.

The enzyme catalyses oxidized [flavodoxin] + pyruvate + CoA + 2 H(+) = reduced [flavodoxin] + acetyl-CoA + CO2. Oxidoreductase required for the transfer of electrons from pyruvate to flavodoxin, which reduces nitrogenase. The polypeptide is Pyruvate-flavodoxin oxidoreductase (nifJ) (Anabaena variabilis).